Here is a 569-residue protein sequence, read N- to C-terminus: Putative potassium-transporting ATPase ATP-binding subunit (569 aa).

2 helical membrane-spanning segments follow: residues 34–54 and 58–78; these read PVMFVVWAGSVLATLLTLAMV and IAGSALFTGVISLWLWFTVLF. The active-site 4-aspartylphosphate intermediate is the Asp-194. Residues Asp-231, Glu-235, 264-271, and Lys-282 contribute to the ATP site; that span reads FTAQSRMS. Residues Asp-405 and Asp-409 each contribute to the Mg(2+) site. Transmembrane regions (helical) follow at residues 475–495, 503–523, and 543–563; these read FAIIPAAFAATYPQLNALNVM, AILSAVIFNALIIIFLIPLAL, and IYGLGGLVVPFIGIKVIDVLL.

This sequence belongs to the cation transport ATPase (P-type) (TC 3.A.3) family. Type IA subfamily. In terms of assembly, the system is composed of three essential subunits: KdpA, KdpB and KdpC.

The protein localises to the cell inner membrane. The catalysed reaction is K(+)(out) + ATP + H2O = K(+)(in) + ADP + phosphate + H(+). Functionally, part of the high-affinity ATP-driven potassium transport (or Kdp) system, which catalyzes the hydrolysis of ATP coupled with the electrogenic transport of potassium into the cytoplasm. This subunit is responsible for energy coupling to the transport system and for the release of the potassium ions to the cytoplasm. The protein is Putative potassium-transporting ATPase ATP-binding subunit of Salmonella typhi.